Here is a 134-residue protein sequence, read N- to C-terminus: Small ribosomal subunit protein uS11 (134 aa).

The segment at 115–134 is disordered; the sequence is TPIPHNGTRPPKKVLKRDLK. A compositionally biased stretch (basic residues) spans 124-134; it reads PPKKVLKRDLK.

It belongs to the universal ribosomal protein uS11 family. In terms of assembly, part of the 30S ribosomal subunit. Interacts with proteins S7 and S18. Binds to IF-3.

Located on the platform of the 30S subunit, it bridges several disparate RNA helices of the 16S rRNA. Forms part of the Shine-Dalgarno cleft in the 70S ribosome. The protein is Small ribosomal subunit protein uS11 of Mycoplasma mobile (strain ATCC 43663 / 163K / NCTC 11711) (Mesomycoplasma mobile).